We begin with the raw amino-acid sequence, 267 residues long: Indole-3-glycerol phosphate synthase (267 aa).

The protein belongs to the TrpC family.

The enzyme catalyses 1-(2-carboxyphenylamino)-1-deoxy-D-ribulose 5-phosphate + H(+) = (1S,2R)-1-C-(indol-3-yl)glycerol 3-phosphate + CO2 + H2O. Its pathway is amino-acid biosynthesis; L-tryptophan biosynthesis; L-tryptophan from chorismate: step 4/5. The protein is Indole-3-glycerol phosphate synthase of Deinococcus radiodurans (strain ATCC 13939 / DSM 20539 / JCM 16871 / CCUG 27074 / LMG 4051 / NBRC 15346 / NCIMB 9279 / VKM B-1422 / R1).